The chain runs to 197 residues: Recombination protein RecR (197 aa).

A C4-type zinc finger spans residues 56-71 (CRLCNNFSEAEVCEVC). A Toprim domain is found at 79 to 174 (RQLAVVEMPA…KVSRLARGVP (96 aa)).

Belongs to the RecR family.

May play a role in DNA repair. It seems to be involved in an RecBC-independent recombinational process of DNA repair. It may act with RecF and RecO. In Thiobacillus denitrificans (strain ATCC 25259 / T1), this protein is Recombination protein RecR.